Reading from the N-terminus, the 325-residue chain is Aquaporin-8 (325 aa).

Residues 1 to 10 (MALRSPARDY) lie on the Cytoplasmic side of the membrane. The helical transmembrane segment at 11–31 (LVSMIGELVGTFLFLFFAFAA) threads the bilayer. At 32–52 (AQTANQPNGTKPLTPNATDTS) the chain is on the extracellular side. N-linked (GlcNAc...) asparagine glycosylation is found at asparagine 39 and asparagine 47. Residues 53–73 (KLLYIALAFGASLAANVWVFF) traverse the membrane as a helical segment. Residues 74-100 (RVSGGQFNPAVTLALVLIRAVSPTKAL) are Cytoplasmic-facing. The NPA 1 motif lies at 81–83 (NPA). Residues 101–121 (ILIPAQLVGGSLAAAAVKGII) traverse the membrane as a helical segment. Residues 122–140 (PGDDILFAVSLGPGVANVQ) are Extracellular-facing. Residues 141–161 (GLFIELLLTFMLVFTILMLVA) form a helical membrane-spanning segment. The Cytoplasmic portion of the chain corresponds to 162–167 (EKTKST). Residues 168–188 (FVAPIGIGFSLFIGHLVGIFW) form a helical membrane-spanning segment. The Extracellular segment spans residues 189-212 (TGAGINPARAFSPALIQASFPSYH). An NPA 2 motif is present at residues 194-196 (NPA). The helical transmembrane segment at 213-233 (WIYWLGPALGSFLAAGLYLGL) threads the bilayer. Residues 234 to 325 (KEMKYELVGG…GSPDSTDLPT (92 aa)) lie on the Cytoplasmic side of the membrane. Disordered regions lie at residues 279-298 (LGQF…LERG) and 305-325 (EDDP…DLPT). Basic and acidic residues predominate over residues 286–298 (TEGHRSPVDLERG).

Belongs to the MIP/aquaporin (TC 1.A.8) family.

Its subcellular location is the cell membrane. It catalyses the reaction H2O2(out) = H2O2(in). The enzyme catalyses H2O(in) = H2O(out). Its function is as follows. Plasma membrane water channel that regulates the reactive oxygen species (ROS)-signaling pathway through its capacity to act as a membrane channel for hydrogen peroxide uptake. Required for the formation of infection structures and infection, especially on host leaves where it is essential for the penetration into the host. Regulates the expression of proteins related to redox-regulation and intracellular signal transduction and plays a role in the distribution of mitochondria in the hyphae. This chain is Aquaporin-8, found in Botryotinia fuckeliana (strain B05.10) (Noble rot fungus).